Here is a 515-residue protein sequence, read N- to C-terminus: 2-isopropylmalate synthase (515 aa).

Residues 5 to 267 (VIIFDTTLRD…HTGLDHKEIH (263 aa)) enclose the Pyruvate carboxyltransferase domain. Mn(2+)-binding residues include aspartate 14, histidine 202, histidine 204, and asparagine 238. The tract at residues 392–515 (KLNYLSVQSG…EMKQQKFATV (124 aa)) is regulatory domain.

The protein belongs to the alpha-IPM synthase/homocitrate synthase family. LeuA type 1 subfamily. As to quaternary structure, homodimer. Mn(2+) is required as a cofactor.

It is found in the cytoplasm. The catalysed reaction is 3-methyl-2-oxobutanoate + acetyl-CoA + H2O = (2S)-2-isopropylmalate + CoA + H(+). The protein operates within amino-acid biosynthesis; L-leucine biosynthesis; L-leucine from 3-methyl-2-oxobutanoate: step 1/4. In terms of biological role, catalyzes the condensation of the acetyl group of acetyl-CoA with 3-methyl-2-oxobutanoate (2-ketoisovalerate) to form 3-carboxy-3-hydroxy-4-methylpentanoate (2-isopropylmalate). The sequence is that of 2-isopropylmalate synthase from Vibrio atlanticus (strain LGP32) (Vibrio splendidus (strain Mel32)).